The sequence spans 122 residues: Large ribosomal subunit protein bL12 (122 aa).

Belongs to the bacterial ribosomal protein bL12 family. As to quaternary structure, homodimer. Part of the ribosomal stalk of the 50S ribosomal subunit. Forms a multimeric L10(L12)X complex, where L10 forms an elongated spine to which 2 to 4 L12 dimers bind in a sequential fashion. Binds GTP-bound translation factors.

Functionally, forms part of the ribosomal stalk which helps the ribosome interact with GTP-bound translation factors. Is thus essential for accurate translation. The polypeptide is Large ribosomal subunit protein bL12 (Staphylococcus haemolyticus (strain JCSC1435)).